A 1029-amino-acid chain; its full sequence is Protein STABILIZED1 (1029 aa).

In terms of domain architecture, Ubiquitin-like spans 1 to 85 (MVFLSIPNGK…VIIHVLLLGG (85 aa)). Gly85 participates in a covalent cross-link: Glycyl lysine isopeptide (Gly-Lys) (interchain with K-? in acceptor proteins). A disordered region spans residues 142-170 (AAPGVGRGAGKPSEAEAEDDEEAEEKRYD). Residues 210 to 243 (DSRRKDRREAKLKEEIEKYRASNPKITEQFADLK) are a coiled coil. HAT repeat units lie at residues 367-399 (YDRNRARLLYKSLTQSNPKNPNGWIAAARVEEV), 401-431 (GKIKAARFQIQRGCEECPKNEDVWLEACRLA), 432-462 (NPEDAKGVIAKGVKLIPNSVKLWLEAAKLEH), 463-494 (DVENKSRVLRKGLEHIPDSVRLWKAVVELANE), 496-524 (DARILLHRAVECCPLHLELWVALARLETY), 526-554 (ESKKVLNKAREKLPKEPAIWITAAKLEEA), 639-671 (GSIETARAIYAHALSVFLTKKSIWLKAAQLEKS), 673-705 (GSRESLDALLRKAVTYVPQAEVLWLMGAKEKWL), 707-739 (GDVPAARAILQEAYAAIPNSEEIWLAAFKLEFE), 741-772 (KEPERARMLLAKARERGGTERVWMKSAIVERE), 774-806 (GNVEEERRLLNEGLKQFPTFFKLWLMLGQLEER), 808-840 (KHLEQARKAYDTGLKHCPHCIPLWLSLADLEEK), 842-874 (NGLNKARAILTTARKKNPGGAELWLAAIRAELR), 876-908 (DNKREAEHLMSKALQDCPKSGILWAADIEMAPR), and 940-972 (KKVEKARAWFERAVTVGPDIGDFWALFYKFELQ). The stretch at 625–658 (KRTWVADADECKKRGSIETARAIYAHALSVFLTK) is one TPR 1 repeat. The TPR 2 repeat unit spans residues 794–827 (FKLWLMLGQLEERFKHLEQARKAYDTGLKHCPHC). The stretch at 926-959 (PHVTIAVAKLFWQDKKVEKARAWFERAVTVGPDI) is one TPR 3 repeat.

As to quaternary structure, component of a pre-mRNA splicing complex. Interacts with ZOP1. Interacts with PRP31. Ubiquitous.

It localises to the nucleus. The protein resides in the cajal body. Pre-mRNA splicing factor required for splicing and for the turnover of unstable transcripts. May be a U5 snRNP-associated protein involved in the formation of U4/U6-U5 tri-snRNP. Involved in responses to abiotic stresses. Involved in microRNAs (miRNAs) biogenesis by functioning in primary miRNAs (pri-miRNAs) splicing. Required for DNA methylation and transcriptional silencing through the RNA-directed DNA methylation (RdDM) pathway. The sequence is that of Protein STABILIZED1 (STA1) from Arabidopsis thaliana (Mouse-ear cress).